The sequence spans 102 residues: uncharacterized protein (102 aa).

Residues 1-13 show a composition bias toward low complexity; the sequence is PSSSQALSVPSLS. Positions 1–24 are disordered; that stretch reads PSSSQALSVPSLSSEKKTASPTCV.

This is an uncharacterized protein from Human cytomegalovirus (strain AD169) (HHV-5).